We begin with the raw amino-acid sequence, 178 residues long: Putative magnesium-dependent phosphatase YER134C (178 aa).

Residue D11 is the Nucleophile of the active site. Mg(2+) is bound at residue D11. Residues L12, D13, S74, and R75 each coordinate phosphate. Mg(2+) is bound at residue D13. Catalysis depends on D13, which acts as the Proton donor. R75 serves as a coordination point for substrate. Residue D141 coordinates Mg(2+).

Belongs to the HAD-like hydrolase superfamily.

It localises to the cytoplasm. It is found in the nucleus. It catalyses the reaction O-phospho-L-tyrosyl-[protein] + H2O = L-tyrosyl-[protein] + phosphate. Magnesium-dependent phosphatase which may act as a tyrosine phosphatase. The sequence is that of Putative magnesium-dependent phosphatase YER134C from Saccharomyces cerevisiae (strain ATCC 204508 / S288c) (Baker's yeast).